We begin with the raw amino-acid sequence, 493 residues long: Solute carrier family 2, facilitated glucose transporter member 3 (493 aa).

At 1–10 (MGTAKVTPSL) the chain is on the cytoplasmic side. A helical transmembrane segment spans residues 11–32 (VFAVTVATIGSFQFGYNTGVIN). At 33–64 (APETIIKDFLNYTLEERLEDLPREGLLTTLWS) the chain is on the extracellular side. N-linked (GlcNAc...) asparagine glycosylation is present at N43. Residues 65-85 (LCVAIFSVGGMIGSFSVGLFV) traverse the membrane as a helical segment. Topologically, residues 86-90 (NRFGR) are cytoplasmic. A helical transmembrane segment spans residues 91-111 (RNSMLLVNLIAILGGCLMGFA). Over 112-118 (KIAESVE) the chain is Extracellular. A helical membrane pass occupies residues 119 to 142 (MLILGRLIIGIFCGLCTGFVPMYI). Residues 143–153 (GEVSPTALRGA) are Cytoplasmic-facing. The chain crosses the membrane as a helical span at residues 154–174 (FGTLNQLGIVVGILVAQVFGL). A D-glucose-binding site is contributed by Q159. Topologically, residues 175-183 (DFILGSEEL) are extracellular. A helical transmembrane segment spans residues 184–204 (WPGLLGLTIIPAILQSAALPF). Topologically, residues 205–269 (CPESPRFLLI…LFKSPSYFQP (65 aa)) are cytoplasmic. At T232 the chain carries Phosphothreonine. A helical transmembrane segment spans residues 270–290 (LLISVVLQLSQQFSGINAVFY). Residues 277-279 (QLS) form an important for selectivity against fructose region. D-glucose-binding positions include 280 to 281 (QQ) and N286. Residues 291–304 (YSTGIFQDAGVQEP) are Extracellular-facing. Residues 305–325 (IYATIGAGVVNTIFTVVSLFL) traverse the membrane as a helical segment. N315 lines the D-glucose pocket. Over 326–331 (VERAGR) the chain is Cytoplasmic. Residues 332-352 (RTLHMIGLGGMAVCSVFMTIS) form a helical membrane-spanning segment. The Extracellular segment spans residues 353–363 (LLLKDEYEAMS). Residues 364-389 (FVCIVAILVYVAFFEIGPGPIPWFIV) traverse the membrane as a helical segment. 2 residues coordinate D-glucose: E378 and W386. Residues 390–399 (AELFSQGPRP) are Cytoplasmic-facing. The helical transmembrane segment at 400-420 (AAMAVAGCSNWTSNFLVGMFF) threads the bilayer. Residues 421-429 (PSAAAYLGA) lie on the Extracellular side of the membrane. A helical membrane pass occupies residues 430-450 (YVFIIFAAFLVFFLIFTSFKV). The Cytoplasmic portion of the chain corresponds to 451-493 (PETKGRTFEDITRAFEGQAHSGKGSAGVELNSMQPVKETPGNA). Phosphoserine is present on residues S471, S475, and S482. T489 carries the post-translational modification Phosphothreonine.

It belongs to the major facilitator superfamily. Sugar transporter (TC 2.A.1.1) family. Glucose transporter subfamily. Interacts with SMIM43; the interaction may promote SLC2A3-mediated glucose transport to meet the energy needs of mesendoderm differentiation. In terms of tissue distribution, brain and osteoblastic cells (at protein level). Highly expressed in brain.

Its subcellular location is the cell membrane. The protein resides in the perikaryon. The protein localises to the cell projection. The catalysed reaction is D-glucose(out) = D-glucose(in). It carries out the reaction D-galactose(in) = D-galactose(out). Its activity is regulated as follows. Deoxyglucose transport is inhibited by D-glucose, D-galactose and maltose. Galactose transport is inhibited by D-glucose and maltose. Functionally, facilitative glucose transporter. Can also mediate the uptake of various other monosaccharides across the cell membrane. Mediates the uptake of glucose, 2-deoxyglucose, galactose, mannose, xylose and fucose, and probably also dehydroascorbate. Does not mediate fructose transport. Required for mesendoderm differentiation. This chain is Solute carrier family 2, facilitated glucose transporter member 3, found in Rattus norvegicus (Rat).